A 224-amino-acid chain; its full sequence is Orotate phosphoribosyltransferase (224 aa).

5-phospho-alpha-D-ribose 1-diphosphate-binding positions include Lys-26, 73–74, Arg-100, Lys-101, Lys-104, His-106, and 127–135; these read YK and EDVTTSGKS. The orotate site is built by Thr-131 and Arg-160.

It belongs to the purine/pyrimidine phosphoribosyltransferase family. PyrE subfamily. In terms of assembly, homodimer. It depends on Mg(2+) as a cofactor.

It catalyses the reaction orotidine 5'-phosphate + diphosphate = orotate + 5-phospho-alpha-D-ribose 1-diphosphate. The protein operates within pyrimidine metabolism; UMP biosynthesis via de novo pathway; UMP from orotate: step 1/2. Its function is as follows. Catalyzes the transfer of a ribosyl phosphate group from 5-phosphoribose 1-diphosphate to orotate, leading to the formation of orotidine monophosphate (OMP). The sequence is that of Orotate phosphoribosyltransferase from Clostridium botulinum (strain Alaska E43 / Type E3).